The following is a 403-amino-acid chain: Dual-specificity RNA methyltransferase RlmN (403 aa).

The active-site Proton acceptor is the Glu126. Residues 132-375 (ETDRGTLCVS…VRTPRGRDIL (244 aa)) enclose the Radical SAM core domain. The cysteines at positions 139 and 378 are disulfide-linked. [4Fe-4S] cluster contacts are provided by Cys146, Cys150, and Cys153. S-adenosyl-L-methionine-binding positions include 204 to 205 (GE), Ser236, 258 to 260 (SLH), and Asn335. Residue Cys378 is the S-methylcysteine intermediate of the active site.

The protein belongs to the radical SAM superfamily. RlmN family. [4Fe-4S] cluster serves as cofactor.

The protein localises to the cytoplasm. The enzyme catalyses adenosine(2503) in 23S rRNA + 2 reduced [2Fe-2S]-[ferredoxin] + 2 S-adenosyl-L-methionine = 2-methyladenosine(2503) in 23S rRNA + 5'-deoxyadenosine + L-methionine + 2 oxidized [2Fe-2S]-[ferredoxin] + S-adenosyl-L-homocysteine. The catalysed reaction is adenosine(37) in tRNA + 2 reduced [2Fe-2S]-[ferredoxin] + 2 S-adenosyl-L-methionine = 2-methyladenosine(37) in tRNA + 5'-deoxyadenosine + L-methionine + 2 oxidized [2Fe-2S]-[ferredoxin] + S-adenosyl-L-homocysteine. Its function is as follows. Specifically methylates position 2 of adenine 2503 in 23S rRNA and position 2 of adenine 37 in tRNAs. m2A2503 modification seems to play a crucial role in the proofreading step occurring at the peptidyl transferase center and thus would serve to optimize ribosomal fidelity. This Bradyrhizobium sp. (strain BTAi1 / ATCC BAA-1182) protein is Dual-specificity RNA methyltransferase RlmN.